A 339-amino-acid chain; its full sequence is Heat-inducible transcription repressor HrcA (339 aa).

It belongs to the HrcA family.

In terms of biological role, negative regulator of class I heat shock genes (grpE-dnaK-dnaJ and groELS operons). Prevents heat-shock induction of these operons. The polypeptide is Heat-inducible transcription repressor HrcA (Clostridium perfringens (strain SM101 / Type A)).